The chain runs to 462 residues: Protein ultraspiracle homolog (462 aa).

Residues 1–113 (MSSVAKKDKR…NHPLSGSKHL (113 aa)) are modulating. NR C4-type zinc fingers lie at residues 114–134 (CSIC…CEGC) and 150–174 (CRED…YQKC). A DNA-binding region (nuclear receptor) is located at residues 114 to 179 (CSICGDRASG…RYQKCLACGM (66 aa)). The interval 180–201 (KREAVQEERQRAARRTEDAHPS) is hinge. The region spanning 204 to 453 (VQELSIERLL…SYIRDALCNH (250 aa)) is the NR LBD domain.

This sequence belongs to the nuclear hormone receptor family. NR2 subfamily. As to quaternary structure, heterodimer of USP and ECR. In terms of tissue distribution, abundant expression seen in males and ovaries.

It localises to the nucleus. The chain is Protein ultraspiracle homolog (USP) from Bombyx mori (Silk moth).